The following is a 421-amino-acid chain: D-amino acid dehydrogenase (421 aa).

V3–Y17 contributes to the FAD binding site.

This sequence belongs to the DadA oxidoreductase family. The cofactor is FAD.

The enzyme catalyses a D-alpha-amino acid + A + H2O = a 2-oxocarboxylate + AH2 + NH4(+). Its pathway is amino-acid degradation; D-alanine degradation; NH(3) and pyruvate from D-alanine: step 1/1. Functionally, oxidative deamination of D-amino acids. The protein is D-amino acid dehydrogenase of Methylobacterium nodulans (strain LMG 21967 / CNCM I-2342 / ORS 2060).